Reading from the N-terminus, the 336-residue chain is Dihydroorotate dehydrogenase (quinone) (336 aa).

FMN is bound by residues 62 to 66 and threonine 86; that span reads AGLDK. Substrate is bound at residue lysine 66. 111-115 serves as a coordination point for substrate; it reads NRMGF. FMN contacts are provided by asparagine 139 and asparagine 172. Asparagine 172 contacts substrate. The active-site Nucleophile is serine 175. Asparagine 177 contributes to the substrate binding site. Positions 217 and 245 each coordinate FMN. Residue 246–247 coordinates substrate; that stretch reads NT. FMN is bound by residues glycine 268, glycine 297, and 318-319; that span reads YS.

Belongs to the dihydroorotate dehydrogenase family. Type 2 subfamily. In terms of assembly, monomer. FMN serves as cofactor.

Its subcellular location is the cell membrane. The enzyme catalyses (S)-dihydroorotate + a quinone = orotate + a quinol. Its pathway is pyrimidine metabolism; UMP biosynthesis via de novo pathway; orotate from (S)-dihydroorotate (quinone route): step 1/1. Catalyzes the conversion of dihydroorotate to orotate with quinone as electron acceptor. The polypeptide is Dihydroorotate dehydrogenase (quinone) (Vibrio atlanticus (strain LGP32) (Vibrio splendidus (strain Mel32))).